Consider the following 309-residue polypeptide: Malate dehydrogenase (309 aa).

NAD(+) contacts are provided by residues 9-14 and aspartate 33; that span reads GAGFVG. The substrate site is built by arginine 82 and arginine 88. Residues asparagine 95 and 118-120 contribute to the NAD(+) site; that span reads VNN. The substrate site is built by asparagine 120 and arginine 151. The active-site Proton acceptor is histidine 175.

It belongs to the LDH/MDH superfamily. MDH type 3 family.

It carries out the reaction (S)-malate + NAD(+) = oxaloacetate + NADH + H(+). Its function is as follows. Catalyzes the reversible oxidation of malate to oxaloacetate. This Roseiflexus sp. (strain RS-1) protein is Malate dehydrogenase.